Consider the following 254-residue polypeptide: Low affinity immunoglobulin gamma Fc region receptor III-A (254 aa).

A signal peptide spans 1–16 (MWQLLLPTALLLLVSA). The Extracellular portion of the chain corresponds to 17 to 208 (GMRAEDLPKA…ISSFFPPGYQ (192 aa)). 2 Ig-like C2-type domains span residues 24-105 (PKAV…LEVH) and 107-189 (GWLL…VNIT). Disulfide bonds link Cys-47–Cys-89 and Cys-128–Cys-172. Residues Asn-56, Asn-63, and Asn-82 are each glycosylated (N-linked (GlcNAc...) asparagine). 2 N-linked (GlcNAc...) asparagine glycosylation sites follow: Asn-180 and Asn-187. Residues 209–229 (VSFCLVMVLLFAVDTGLYFSM) traverse the membrane as a helical segment. The Cytoplasmic portion of the chain corresponds to 230–254 (KKSIPSSTRDWEDHKFKWSKDPQDK).

Forms a heterooligomeric complex with ITAM-containing signaling subunits, either a homodimer of CD247, a homodimer of FCER1G or a heterodimer of CD247 and FCER1G. Interacts (via transmembrane domain) with signaling subunits; this interaction is a prerequisite for receptor complex expression on the cell surface and intracellular signal transduction. Binds the Fc region of antigen-complexed IgG with a preference for IgG1 and IgG3 isotypes. Interacts with CD2; this interaction is involved in NK cell activation and cytotoxicity. Interacts with S100A4; this interaction inhibits PKC-dependent phosphorylation of FCGR3A. In terms of processing, glycosylated. Glycosylation plays an inhibitory role in the interaction with IgG1 and IgG2. Post-translationally, undergoes rapid ectodomain shedding upon NK cell stimulation. The soluble form is produced by a proteolytic cleavage mediated by ADAM17. Repeated stimulation causes receptor shedding, a mechanism that allows for increased NK cell motility and detachment from opsonized target cells while avoiding activation-induced NK cell apoptosis. As to expression, lymphocytes and monocytes.

It is found in the cell membrane. The protein localises to the secreted. In terms of biological role, receptor for the invariable Fc fragment of immunoglobulin gamma (IgG). Optimally activated upon binding of clustered antigen-IgG complexes displayed on cell surfaces, triggers lysis of antibody-coated cells, a process known as antibody-dependent cellular cytotoxicity (ADCC). Does not bind free monomeric IgG, thus avoiding inappropriate effector cell activation in the absence of antigenic trigger. Mediates IgG effector functions on natural killer (NK) cells. Binds antigen-IgG complexes generated upon infection and triggers NK cell-dependent cytokine production and degranulation to limit viral load and propagation. Involved in the generation of memory-like adaptive NK cells capable to produce high amounts of IFNG and to efficiently eliminate virus-infected cells via ADCC. Regulates NK cell survival and proliferation, in particular by preventing NK cell progenitor apoptosis. Fc-binding subunit that associates with CD247 and/or FCER1G adapters to form functional signaling complexes. Following the engagement of antigen-IgG complexes, triggers phosphorylation of immunoreceptor tyrosine-based activation motif (ITAM)-containing adapters with subsequent activation of phosphatidylinositol 3-kinase signaling and sustained elevation of intracellular calcium that ultimately drive NK cell activation. The ITAM-dependent signaling coupled to receptor phosphorylation by PKC mediates robust intracellular calcium flux that leads to production of pro-inflammatory cytokines, whereas in the absence of receptor phosphorylation it mainly activates phosphatidylinositol 3-kinase signaling leading to cell degranulation. Costimulates NK cells and trigger lysis of target cells independently of IgG binding. Mediates the antitumor activities of therapeutic antibodies. Upon ligation on monocytes triggers TNFA-dependent ADCC of IgG-coated tumor cells. Mediates enhanced ADCC in response to afucosylated IgGs. This chain is Low affinity immunoglobulin gamma Fc region receptor III-A (FCGR3A), found in Macaca fascicularis (Crab-eating macaque).